We begin with the raw amino-acid sequence, 78 residues long: U-scoloptoxin(04)-Er1e (78 aa).

The signal sequence occupies residues 1–24; that stretch reads MTRHLIFAAMLLVCLFVCWNAVGA. Residues 25-28 constitute a propeptide that is removed on maturation; sequence RDAR.

It belongs to the scoloptoxin-04 family. Post-translationally, contains 2 disulfide bonds. In terms of tissue distribution, expressed by the venom gland.

The protein localises to the secreted. This Ethmostigmus rubripes (Giant centipede) protein is U-scoloptoxin(04)-Er1e.